Here is a 363-residue protein sequence, read N- to C-terminus: Spermatogenesis-associated protein 22 (363 aa).

Polar residues-rich tracts occupy residues 1–12 (MKRSLNENSARS), 30–48 (QPLTSNPLKDDSGISTPSD), 98–108 (IQSNTGRSQGG), and 140–157 (NDGKNSCPVSSGAQQQKQ). 3 disordered regions span residues 1 to 51 (MKRS…DNYD), 98 to 127 (IQSNTGRSQGGWSYRDGNKNTSLKTWNKND), and 140 to 170 (NDGKNSCPVSSGAQQQKQLRIPEPPNLSRNK).

In terms of assembly, component of a multiprotein complex with MEIOB and RPA2. Interacts with MEIOB. Interacts with the complex BRME1:HSF2BP:BRCA2. Highly expressed in adult testis.

The protein resides in the chromosome. In terms of biological role, meiosis-specific protein required for homologous recombination in meiosis I. This is Spermatogenesis-associated protein 22 from Homo sapiens (Human).